Here is a 548-residue protein sequence, read N- to C-terminus: Chaperonin GroEL (548 aa).

ATP contacts are provided by residues T30 to P33, K51, D87 to T91, G415, N478 to A480, and D494.

It belongs to the chaperonin (HSP60) family. In terms of assembly, forms a cylinder of 14 subunits composed of two heptameric rings stacked back-to-back. Interacts with the co-chaperonin GroES.

The protein localises to the cytoplasm. The enzyme catalyses ATP + H2O + a folded polypeptide = ADP + phosphate + an unfolded polypeptide.. Its function is as follows. Together with its co-chaperonin GroES, plays an essential role in assisting protein folding. The GroEL-GroES system forms a nano-cage that allows encapsulation of the non-native substrate proteins and provides a physical environment optimized to promote and accelerate protein folding. The chain is Chaperonin GroEL from Trichlorobacter lovleyi (strain ATCC BAA-1151 / DSM 17278 / SZ) (Geobacter lovleyi).